A 142-amino-acid polypeptide reads, in one-letter code: Large ribosomal subunit protein uL13 (142 aa).

It belongs to the universal ribosomal protein uL13 family. Part of the 50S ribosomal subunit.

Its function is as follows. This protein is one of the early assembly proteins of the 50S ribosomal subunit, although it is not seen to bind rRNA by itself. It is important during the early stages of 50S assembly. The chain is Large ribosomal subunit protein uL13 from Treponema pallidum (strain Nichols).